Reading from the N-terminus, the 243-residue chain is MKSLWQEWLGAIAFYTCLPISPRWPIQLAGAAKWCPWVGLVLGGMLWGVQWLLDFLQVPSPVASAVLVALWLALTGGLHLDGAMDTADGLAVRDQQRRLEVMADSRAGAFGVMAAMVILLLKVTSLSSLEKGSVLVWVLVLGRLAQVWAIARYPYLKPQGTGQIHKTSGVFPRDFWPSGLLVLLLSFLLPLPLGQLLFGLLLILLIPAWFQSQLGGHTGDSYGAVVEWTEALLLVAFTVGSAS.

7 consecutive transmembrane segments (helical) span residues 8–28 (WLGA…PIQL), 36–56 (PWVG…LDFL), 58–78 (VPSP…TGGL), 107–127 (AGAF…TSLS), 131–151 (KGSV…WAIA), 187–207 (FLLP…LLIP), and 222–242 (YGAV…VGSA).

The protein belongs to the CobS family. Mg(2+) is required as a cofactor.

The protein localises to the cell inner membrane. It carries out the reaction alpha-ribazole + adenosylcob(III)inamide-GDP = adenosylcob(III)alamin + GMP + H(+). The enzyme catalyses alpha-ribazole 5'-phosphate + adenosylcob(III)inamide-GDP = adenosylcob(III)alamin 5'-phosphate + GMP + H(+). The protein operates within cofactor biosynthesis; adenosylcobalamin biosynthesis; adenosylcobalamin from cob(II)yrinate a,c-diamide: step 7/7. Functionally, joins adenosylcobinamide-GDP and alpha-ribazole to generate adenosylcobalamin (Ado-cobalamin). Also synthesizes adenosylcobalamin 5'-phosphate from adenosylcobinamide-GDP and alpha-ribazole 5'-phosphate. This Thermosynechococcus vestitus (strain NIES-2133 / IAM M-273 / BP-1) protein is Adenosylcobinamide-GDP ribazoletransferase.